A 211-amino-acid polypeptide reads, in one-letter code: Xanthine phosphoribosyltransferase (211 aa).

Xanthine contacts are provided by Leu-31 and Asn-38. Residue 138 to 142 (ANGRT) coordinates 5-phospho-alpha-D-ribose 1-diphosphate. A xanthine-binding site is contributed by Lys-166.

The protein belongs to the purine/pyrimidine phosphoribosyltransferase family. Xpt subfamily. In terms of assembly, homodimer.

The protein localises to the cytoplasm. The catalysed reaction is XMP + diphosphate = xanthine + 5-phospho-alpha-D-ribose 1-diphosphate. It functions in the pathway purine metabolism; XMP biosynthesis via salvage pathway; XMP from xanthine: step 1/1. Functionally, converts the preformed base xanthine, a product of nucleic acid breakdown, to xanthosine 5'-monophosphate (XMP), so it can be reused for RNA or DNA synthesis. This chain is Xanthine phosphoribosyltransferase, found in Chloroflexus aurantiacus (strain ATCC 29364 / DSM 637 / Y-400-fl).